Here is a 347-residue protein sequence, read N- to C-terminus: MSEPLILGIESSCDETGVGIVRGNDLLANEVASSMEQHVRFGGVVPEVASRAHLEAIVPVLDKAASTAGVDLSELDGIAVTAGPGLAGALVVGLSAAKALASWLNKPLYGVNHLAGHVAVDLLEHGELPMPCGALLVSGGHTSLLWVNDIATDIIEVGSTIDDAAGEAYDKVARVLGLPYPGGPVIDKAAAEGDPTAIRFPRGLTARHDMVKHRFDYSFSGLKTAVSRWVETQQRDGVEFRIADVAASFQEAVADVLTAKAVDMCQEYGLTHFLIGGGVAANSRLRTLLAERMADAGVELRRPRPGLCTDNGAMIAALGVQVVKAGLPASAMDISADSGLPIETVLV.

Residues H113 and H117 each coordinate Fe cation. Substrate is bound by residues 136-140 (LVSGG), D170, G183, D187, and N282. D310 lines the Fe cation pocket.

Belongs to the KAE1 / TsaD family. Requires Fe(2+) as cofactor.

The protein resides in the cytoplasm. It carries out the reaction L-threonylcarbamoyladenylate + adenosine(37) in tRNA = N(6)-L-threonylcarbamoyladenosine(37) in tRNA + AMP + H(+). Required for the formation of a threonylcarbamoyl group on adenosine at position 37 (t(6)A37) in tRNAs that read codons beginning with adenine. Is involved in the transfer of the threonylcarbamoyl moiety of threonylcarbamoyl-AMP (TC-AMP) to the N6 group of A37, together with TsaE and TsaB. TsaD likely plays a direct catalytic role in this reaction. This chain is tRNA N6-adenosine threonylcarbamoyltransferase, found in Cutibacterium acnes (strain DSM 16379 / KPA171202) (Propionibacterium acnes).